The following is a 753-amino-acid chain: Polyribonucleotide nucleotidyltransferase (753 aa).

2 residues coordinate Mg(2+): Asp-543 and Asp-549. The KH domain maps to Pro-609–Ile-668. The S1 motif domain maps to Gly-680–Val-749.

This sequence belongs to the polyribonucleotide nucleotidyltransferase family. Mg(2+) is required as a cofactor.

The protein localises to the cytoplasm. It carries out the reaction RNA(n+1) + phosphate = RNA(n) + a ribonucleoside 5'-diphosphate. Its function is as follows. Involved in mRNA degradation. Catalyzes the phosphorolysis of single-stranded polyribonucleotides processively in the 3'- to 5'-direction. The sequence is that of Polyribonucleotide nucleotidyltransferase from Corynebacterium glutamicum (strain R).